The sequence spans 329 residues: 4-hydroxythreonine-4-phosphate dehydrogenase (329 aa).

Substrate-binding residues include His-136 and Thr-137. 3 residues coordinate a divalent metal cation: His-166, His-211, and His-266. Substrate-binding residues include Lys-274, Asn-283, and Arg-292.

It belongs to the PdxA family. In terms of assembly, homodimer. Requires Zn(2+) as cofactor. Mg(2+) is required as a cofactor. The cofactor is Co(2+).

It localises to the cytoplasm. The enzyme catalyses 4-(phosphooxy)-L-threonine + NAD(+) = 3-amino-2-oxopropyl phosphate + CO2 + NADH. The protein operates within cofactor biosynthesis; pyridoxine 5'-phosphate biosynthesis; pyridoxine 5'-phosphate from D-erythrose 4-phosphate: step 4/5. Catalyzes the NAD(P)-dependent oxidation of 4-(phosphooxy)-L-threonine (HTP) into 2-amino-3-oxo-4-(phosphooxy)butyric acid which spontaneously decarboxylates to form 3-amino-2-oxopropyl phosphate (AHAP). The protein is 4-hydroxythreonine-4-phosphate dehydrogenase of Salmonella typhi.